A 348-amino-acid polypeptide reads, in one-letter code: Endoglucanase-6B (348 aa).

Residues Trp52 and Ser54 each contribute to the substrate site. Residues Asp92 and Asp139 each act as proton donor in the active site. The substrate site is built by Asn183, Trp186, Asn222, Trp282, Lys310, and Glu314. A compositionally biased stretch (low complexity) spans 222 to 241 (NYNPYSTSNPPPYTSGSPSP). The segment at 222–244 (NYNPYSTSNPPPYTSGSPSPDES) is disordered.

It belongs to the glycosyl hydrolase 6 (cellulase B) family. In terms of assembly, monomer.

The catalysed reaction is Endohydrolysis of (1-&gt;4)-beta-D-glucosidic linkages in cellulose, lichenin and cereal beta-D-glucans.. Plays a central role in the recycling of plant biomass. The biological conversion of cellulose to glucose generally requires three types of hydrolytic enzymes: (1) Endoglucanases which cut internal beta-1,4-glucosidic bonds; (2) Exocellobiohydrolases that cut the disaccharide cellobiose from the non-reducing end of the cellulose polymer chain; (3) Beta-1,4-glucosidases which hydrolyze the cellobiose and other short cello-oligosaccharides to glucose. The chain is Endoglucanase-6B from Humicola insolens (Soft-rot fungus).